Here is a 293-residue protein sequence, read N- to C-terminus: Ribosomal protein L11 methyltransferase (293 aa).

S-adenosyl-L-methionine-binding residues include Thr145, Gly166, Asp188, and Asn230.

This sequence belongs to the methyltransferase superfamily. PrmA family.

Its subcellular location is the cytoplasm. The catalysed reaction is L-lysyl-[protein] + 3 S-adenosyl-L-methionine = N(6),N(6),N(6)-trimethyl-L-lysyl-[protein] + 3 S-adenosyl-L-homocysteine + 3 H(+). Functionally, methylates ribosomal protein L11. This chain is Ribosomal protein L11 methyltransferase, found in Shewanella sediminis (strain HAW-EB3).